The following is a 119-amino-acid chain: Large ribosomal subunit protein bL20 (119 aa).

Belongs to the bacterial ribosomal protein bL20 family.

Binds directly to 23S ribosomal RNA and is necessary for the in vitro assembly process of the 50S ribosomal subunit. It is not involved in the protein synthesizing functions of that subunit. The protein is Large ribosomal subunit protein bL20 of Streptococcus uberis (strain ATCC BAA-854 / 0140J).